The primary structure comprises 454 residues: Probable diacyglycerol O-acyltransferase tgs2 (454 aa).

The active-site Proton acceptor is the histidine 139.

It belongs to the long-chain O-acyltransferase family.

It catalyses the reaction an acyl-CoA + a 1,2-diacyl-sn-glycerol = a triacyl-sn-glycerol + CoA. It carries out the reaction a long chain fatty alcohol + a fatty acyl-CoA = a wax ester + CoA. It functions in the pathway glycerolipid metabolism; triacylglycerol biosynthesis. Its function is as follows. Catalyzes the terminal and only committed step in triacylglycerol synthesis by using diacylglycerol and fatty acyl CoA as substrates. Required for storage lipid synthesis. The protein is Probable diacyglycerol O-acyltransferase tgs2 (tgs2) of Mycobacterium tuberculosis (strain CDC 1551 / Oshkosh).